Reading from the N-terminus, the 1013-residue chain is Trehalose monomycolate exporter MmpL3 (1013 aa).

Over 1–14 (MFAWWGRTVYQFRY) the chain is Cytoplasmic. A helical transmembrane segment spans residues 15 to 35 (IVIGVMVALCLGGGVYGISLG). Residues 36-196 (NHVTQSGFYD…KRAEVAAIPL (161 aa)) are Periplasmic-facing. 40–44 (QSGFY) provides a ligand contact to a 1,2-diacylglycero-3-phosphoethanolamine. Helical transmembrane passes span 197-217 (VAVVLFFVFGTVIAAALPAII) and 218-238 (GGLAIAGALGIMRLVAEFTPV). Topologically, residues 239 to 240 (HF) are periplasmic. The chain crosses the membrane as a helical span at residues 241-261 (FAQPVVTLIGLGIAIDYGLFI). At 262–290 (VSRFREEIAEGYDTEAAVRRTVMTSGRTV) the chain is on the cytoplasmic side. Residues 291-311 (VFSAVIIVASSVPLLLFPQGF) traverse the membrane as a helical segment. Over 312 to 317 (LKSITY) the chain is Periplasmic. The helical transmembrane segment at 318 to 338 (AIIASVMLAAILSITVLAAAL) threads the bilayer. At 339 to 401 (AILGPRVDAL…RLVNVVMKRP (63 aa)) the chain is on the cytoplasmic side. The chain crosses the membrane as a helical span at residues 402-422 (IAFAAPILVVMVLLIIPLGQL). Residues 423–567 (SLGGISEKYL…HSLFDKLPLM (145 aa)) are Periplasmic-facing. A disordered region spans residues 485–513 (SGFTDPDNDPEKMWKERPANDSGSKDPSV). Residues 493 to 512 (DPEKMWKERPANDSGSKDPS) are compositionally biased toward basic and acidic residues. A helical membrane pass occupies residues 568 to 588 (ALILIVTTTVLMFLAFGSVVL). Over 589-591 (PIK) the chain is Cytoplasmic. A helical transmembrane segment spans residues 592-612 (AALMSALTLGSTMGILTWMFV). The Periplasmic portion of the chain corresponds to 613-630 (DGHGSGLMNYTPQPLMAP). The chain crosses the membrane as a helical span at residues 631-651 (MIGLIIAVIWGLSTDYEVFLV). Asp-645 provides a ligand contact to SQ109. Over 652–678 (SRMVEARERGMSTAEAIRIGTATTGRL) the chain is Cytoplasmic. Residues 679–699 (ITGAALILAVVAGAFVFSDLV) form a helical membrane-spanning segment. The Periplasmic segment spans residues 700–703 (MMKY). Residues 704–724 (LAFGLLIALLLDATIIRMFLV) traverse the membrane as a helical segment. The Cytoplasmic portion of the chain corresponds to 725–1013 (PAVMKLLGDD…QDLLRREGRL (289 aa)). The segment at 754–1013 (TELPDERKRP…QDLLRREGRL (260 aa)) is disordered. Residues 757–772 (PDERKRPTVRESETDQ) are compositionally biased toward basic and acidic residues. 2 stretches are compositionally biased toward pro residues: residues 792 to 803 (HPAPEPVRPMPP) and 820 to 829 (PPQPPQPPQA). Low complexity predominate over residues 842 to 867 (RFAMARNAVRNAVNSAVHGGAGSAAA). Residues 875 to 885 (PGGPAQPPAPP) show a composition bias toward pro residues. Over residues 973 to 996 (REQEPSTEKLNTREDAPEDPETKR) the composition is skewed to basic and acidic residues.

This sequence belongs to the resistance-nodulation-cell division (RND) (TC 2.A.6) family. MmpL subfamily. Monomer. Interacts with TtfA (via N-terminus); active trehalose monomycolate (TMM) biosynthesis is not required for the complex formation. Interacts with MSMEG_5308.

The protein localises to the cell inner membrane. The protein resides in the cell septum. Its subcellular location is the cell tip. With respect to regulation, inhibited by the antimycobacterial compound BM212, a pyrrole derivative. Inhibited by the antitubercular drug SQ109. Inhibited by the adamantyl urea derivative AU1235, the indole carboxamide ICA38 and rimonabant, the antagonist for the cannabinoid receptor CB1. The dissociation constant (Kd) values for SQ109, AU1235, ICA38 and rimonabant are 1.65 uM, 0.29, 0.16 and 29.5, respectively. Inhibitory effects are due to binding of the inhibitors at the proton-transportation channel most likely dissipating the transmembrane electrochemical proton gradient needed for substrate translocation. In terms of biological role, transports trehalose monomycolate (TMM) to the cell wall. Flips TMM across the inner membrane. Membrane potential is not required for this function. Transports probably phosphatidylethanolamine (PE) as well. Binds specifically both TMM and PE, but not trehalose dimycolate (TDM). Also binds diacylglycerol (DAG) and other phospholipids, including phosphatidylglycerol (PG), phosphatidylinositol (PI), and cardiolipin (CDL). Contributes to membrane potential, cell wall composition, antibiotic susceptibility and fitness. This chain is Trehalose monomycolate exporter MmpL3, found in Mycolicibacterium smegmatis (strain ATCC 700084 / mc(2)155) (Mycobacterium smegmatis).